The chain runs to 450 residues: Chromosomal replication initiator protein DnaA (450 aa).

Residues 1 to 84 are domain I, interacts with DnaA modulators; it reads MTENEQIFWN…AVDYVYEDNL (84 aa). The domain II stretch occupies residues 84–109; the sequence is LMIEQQHQGQQGYTEQAFQQLPAVQS. Residues 110-328 form a domain III, AAA+ region region; the sequence is DLNPKYSFDN…GALKDISLVA (219 aa). The ATP site is built by Gly154, Gly156, Lys157, and Thr158. The segment at 329-450 is domain IV, binds dsDNA; that stretch reads NFKQIDTITV…EIETIKNKIK (122 aa).

Belongs to the DnaA family. In terms of assembly, oligomerizes as a right-handed, spiral filament on DNA at oriC.

The protein localises to the cytoplasm. Its function is as follows. Plays an essential role in the initiation and regulation of chromosomal replication. ATP-DnaA binds to the origin of replication (oriC) to initiate formation of the DNA replication initiation complex once per cell cycle. Binds the DnaA box (a 9 base pair repeat at the origin) and separates the double-stranded (ds)DNA. Forms a right-handed helical filament on oriC DNA; dsDNA binds to the exterior of the filament while single-stranded (ss)DNA is stabiized in the filament's interior. The ATP-DnaA-oriC complex binds and stabilizes one strand of the AT-rich DNA unwinding element (DUE), permitting loading of DNA polymerase. After initiation quickly degrades to an ADP-DnaA complex that is not apt for DNA replication. Binds acidic phospholipids. The polypeptide is Chromosomal replication initiator protein DnaA (Streptococcus equi subsp. zooepidemicus (strain H70)).